The primary structure comprises 140 residues: Large ribosomal subunit protein bL17 (140 aa).

It belongs to the bacterial ribosomal protein bL17 family. In terms of assembly, part of the 50S ribosomal subunit. Contacts protein L32.

This Rhizobium johnstonii (strain DSM 114642 / LMG 32736 / 3841) (Rhizobium leguminosarum bv. viciae) protein is Large ribosomal subunit protein bL17.